A 658-amino-acid chain; its full sequence is DNA ligase (658 aa).

NAD(+) is bound by residues 31-35, 80-81, and Glu110; these read DFEYD and SL. The active-site N6-AMP-lysine intermediate is Lys112. Residues Arg133, Glu167, Lys279, and Lys303 each contribute to the NAD(+) site. Cys397, Cys400, Cys415, and Cys420 together coordinate Zn(2+). A BRCT domain is found at 584 to 654; it reads DTASIYFQKS…KALNIPIINE (71 aa).

This sequence belongs to the NAD-dependent DNA ligase family. LigA subfamily. Mg(2+) serves as cofactor. Requires Mn(2+) as cofactor.

It carries out the reaction NAD(+) + (deoxyribonucleotide)n-3'-hydroxyl + 5'-phospho-(deoxyribonucleotide)m = (deoxyribonucleotide)n+m + AMP + beta-nicotinamide D-nucleotide.. Its function is as follows. DNA ligase that catalyzes the formation of phosphodiester linkages between 5'-phosphoryl and 3'-hydroxyl groups in double-stranded DNA using NAD as a coenzyme and as the energy source for the reaction. It is essential for DNA replication and repair of damaged DNA. The chain is DNA ligase from Mycoplasma pneumoniae (strain ATCC 29342 / M129 / Subtype 1) (Mycoplasmoides pneumoniae).